Here is a 320-residue protein sequence, read N- to C-terminus: Ribonuclease Z (320 aa).

Zn(2+)-binding residues include His62, His64, Asp66, His67, His139, Asp210, and His268. Residue Asp66 is the Proton acceptor of the active site.

The protein belongs to the RNase Z family. Homodimer. Zn(2+) is required as a cofactor.

It catalyses the reaction Endonucleolytic cleavage of RNA, removing extra 3' nucleotides from tRNA precursor, generating 3' termini of tRNAs. A 3'-hydroxy group is left at the tRNA terminus and a 5'-phosphoryl group is left at the trailer molecule.. Functionally, zinc phosphodiesterase, which displays some tRNA 3'-processing endonuclease activity. Probably involved in tRNA maturation, by removing a 3'-trailer from precursor tRNA. The protein is Ribonuclease Z of Cyanothece sp. (strain PCC 7425 / ATCC 29141).